The following is a 346-amino-acid chain: DNA ligase (346 aa).

ATP-binding positions include 32 to 35 (DCKY), R39, 55 to 57 (RVS), E93, E142, and R149. Residue K34 is the N6-AMP-lysine intermediate of the active site. E223 lines the a divalent metal cation pocket. ATP contacts are provided by K238 and K244.

It belongs to the ATP-dependent DNA ligase family. Requires a divalent metal cation as cofactor.

It carries out the reaction ATP + (deoxyribonucleotide)n-3'-hydroxyl + 5'-phospho-(deoxyribonucleotide)m = (deoxyribonucleotide)n+m + AMP + diphosphate.. In terms of biological role, DNA ligase, which is expressed in the early stage of lytic development, has been implicated in T7 DNA synthesis and genetic recombination. It may also play a role in T7 DNA repair. This chain is DNA ligase (1.3), found in Enterobacteria phage T3 (Bacteriophage T3).